The chain runs to 331 residues: Ketol-acid reductoisomerase (NADP(+)) (331 aa).

In terms of domain architecture, KARI N-terminal Rossmann spans 2 to 182; the sequence is AQLFYDSDAD…GGTRAGILET (181 aa). NADP(+) contacts are provided by residues 25–28, Ser51, Ser53, and 83–86; these read YGSQ and DEFQ. His108 is an active-site residue. Residue Gly134 coordinates NADP(+). Positions 183–328 constitute a KARI C-terminal knotted domain; the sequence is NFKEETETDL…KGLRAMFSWL (146 aa). The Mg(2+) site is built by Asp191, Glu195, Glu227, and Glu231. Residue Ser252 coordinates substrate.

Belongs to the ketol-acid reductoisomerase family. It depends on Mg(2+) as a cofactor.

It carries out the reaction (2R)-2,3-dihydroxy-3-methylbutanoate + NADP(+) = (2S)-2-acetolactate + NADPH + H(+). It catalyses the reaction (2R,3R)-2,3-dihydroxy-3-methylpentanoate + NADP(+) = (S)-2-ethyl-2-hydroxy-3-oxobutanoate + NADPH + H(+). The protein operates within amino-acid biosynthesis; L-isoleucine biosynthesis; L-isoleucine from 2-oxobutanoate: step 2/4. It participates in amino-acid biosynthesis; L-valine biosynthesis; L-valine from pyruvate: step 2/4. Functionally, involved in the biosynthesis of branched-chain amino acids (BCAA). Catalyzes an alkyl-migration followed by a ketol-acid reduction of (S)-2-acetolactate (S2AL) to yield (R)-2,3-dihydroxy-isovalerate. In the isomerase reaction, S2AL is rearranged via a Mg-dependent methyl migration to produce 3-hydroxy-3-methyl-2-ketobutyrate (HMKB). In the reductase reaction, this 2-ketoacid undergoes a metal-dependent reduction by NADPH to yield (R)-2,3-dihydroxy-isovalerate. The polypeptide is Ketol-acid reductoisomerase (NADP(+)) (Prochlorococcus marinus (strain MIT 9313)).